The following is a 98-amino-acid chain: Integration host factor subunit alpha (98 aa).

Belongs to the bacterial histone-like protein family. As to quaternary structure, heterodimer of an alpha and a beta chain.

Functionally, this protein is one of the two subunits of integration host factor, a specific DNA-binding protein that functions in genetic recombination as well as in transcriptional and translational control. The sequence is that of Integration host factor subunit alpha from Idiomarina loihiensis (strain ATCC BAA-735 / DSM 15497 / L2-TR).